The chain runs to 289 residues: Diaminopimelate epimerase (289 aa).

Residues Asn-13, Gln-47, and Asn-67 each contribute to the substrate site. Cys-76 functions as the Proton donor in the catalytic mechanism. Substrate-binding positions include 77 to 78, Asn-167, Asn-200, and 218 to 219; these read GN and ER. Catalysis depends on Cys-227, which acts as the Proton acceptor. Residue 228 to 229 participates in substrate binding; the sequence is GT.

This sequence belongs to the diaminopimelate epimerase family. Homodimer.

The protein localises to the cytoplasm. It carries out the reaction (2S,6S)-2,6-diaminopimelate = meso-2,6-diaminopimelate. Its pathway is amino-acid biosynthesis; L-lysine biosynthesis via DAP pathway; DL-2,6-diaminopimelate from LL-2,6-diaminopimelate: step 1/1. Functionally, catalyzes the stereoinversion of LL-2,6-diaminopimelate (L,L-DAP) to meso-diaminopimelate (meso-DAP), a precursor of L-lysine and an essential component of the bacterial peptidoglycan. This Burkholderia pseudomallei (strain K96243) protein is Diaminopimelate epimerase.